The sequence spans 157 residues: Small ribosomal subunit protein uS7 (157 aa).

The protein belongs to the universal ribosomal protein uS7 family. In terms of assembly, part of the 30S ribosomal subunit. Contacts proteins S9 and S11.

One of the primary rRNA binding proteins, it binds directly to 16S rRNA where it nucleates assembly of the head domain of the 30S subunit. Is located at the subunit interface close to the decoding center, probably blocks exit of the E-site tRNA. The sequence is that of Small ribosomal subunit protein uS7 from Chlamydia muridarum (strain MoPn / Nigg).